A 493-amino-acid polypeptide reads, in one-letter code: Argininosuccinate lyase (493 aa).

Belongs to the lyase 1 family. Argininosuccinate lyase subfamily.

It is found in the cytoplasm. It carries out the reaction 2-(N(omega)-L-arginino)succinate = fumarate + L-arginine. It participates in amino-acid biosynthesis; L-arginine biosynthesis; L-arginine from L-ornithine and carbamoyl phosphate: step 3/3. In Clavibacter sepedonicus (Clavibacter michiganensis subsp. sepedonicus), this protein is Argininosuccinate lyase.